Reading from the N-terminus, the 543-residue chain is Chaperonin GroEL (543 aa).

ATP-binding positions include Thr29 to Pro32, Asp86 to Thr90, Gly413, Asn476 to Ala478, and Asp492.

This sequence belongs to the chaperonin (HSP60) family. As to quaternary structure, forms a cylinder of 14 subunits composed of two heptameric rings stacked back-to-back. Interacts with the co-chaperonin GroES.

It is found in the cytoplasm. It carries out the reaction ATP + H2O + a folded polypeptide = ADP + phosphate + an unfolded polypeptide.. Functionally, together with its co-chaperonin GroES, plays an essential role in assisting protein folding. The GroEL-GroES system forms a nano-cage that allows encapsulation of the non-native substrate proteins and provides a physical environment optimized to promote and accelerate protein folding. The protein is Chaperonin GroEL of Streptococcus pyogenes serotype M3 (strain SSI-1).